The primary structure comprises 600 residues: MIKYIRNFSIIAHIDHGKSTLSDRLIQTCGGLNEREMTSQVLDSMELERERGITIKSQNVTLNYKSKSGQPYQLNLIDTPGHVDFSYEVSRSLAACEGALLIVDVTQGVEAQTVANYRIAKEMNLKIIVALNKIDLSTADPNRASQEIKNIIGIDVNNAIQCSAKTGYGIPELLECLIHDIPHPQGDPCAPLQALIIDSWFNQYLGVVSLICIKNGKLYKGDVLKSMNTGQKYTVDQIGIFTPKQVKREILDCGEVGWLVCANKNIIKTPVGDTFTLSTHPAKKACHGFKKLQPYVYAGLFPIGSKNQKIFRDALYKLSLNDSSLFYEPERSEFLGLGFRCGFLGLLHLDIIQERLRREYSLDLLVTAPMVVYEILTIDNRIIYVDSPSKLLSLTKIKEIREPVVLCNILLPKKYLGEIISLCIKKRGTQIDIIYHSTQVTLTYELPMSEIILNFFDQIKSASHGYASFEYKFSRFQRSNIVCIEILINKKRIDALTVITHQEQSIYHGRLLVNKLQKLIPRQQFDIVIQATIGKRIISRGIVKQLRKNVLAKCHGGDITRKKKLLYNQKEGKKRMKQIGNVNLPHTVFLAVFDVNNNKK.

One can recognise a tr-type G domain in the interval 3–185 (KYIRNFSIIA…CLIHDIPHPQ (183 aa)). Residues 15–20 (DHGKST) and 132–135 (NKID) each bind GTP.

Belongs to the TRAFAC class translation factor GTPase superfamily. Classic translation factor GTPase family. LepA subfamily.

The protein resides in the cell inner membrane. The catalysed reaction is GTP + H2O = GDP + phosphate + H(+). Functionally, required for accurate and efficient protein synthesis under certain stress conditions. May act as a fidelity factor of the translation reaction, by catalyzing a one-codon backward translocation of tRNAs on improperly translocated ribosomes. Back-translocation proceeds from a post-translocation (POST) complex to a pre-translocation (PRE) complex, thus giving elongation factor G a second chance to translocate the tRNAs correctly. Binds to ribosomes in a GTP-dependent manner. This is Elongation factor 4 from Blochmanniella pennsylvanica (strain BPEN).